We begin with the raw amino-acid sequence, 159 residues long: Small ribosomal subunit protein uS4 (159 aa).

The S4 RNA-binding domain occupies 106-158; the sequence is RRLQTIVYRMGLAKSIYHARQLIVHGHIAVAGRRVSSPGFLVPRELEDKISLI.

Belongs to the universal ribosomal protein uS4 family. Part of the 30S ribosomal subunit. Contacts protein S5. The interaction surface between S4 and S5 is involved in control of translational fidelity.

Functionally, one of the primary rRNA binding proteins, it binds directly to 16S rRNA where it nucleates assembly of the body of the 30S subunit. In terms of biological role, with S5 and S12 plays an important role in translational accuracy. This is Small ribosomal subunit protein uS4 from Pyrobaculum neutrophilum (strain DSM 2338 / JCM 9278 / NBRC 100436 / V24Sta) (Thermoproteus neutrophilus).